We begin with the raw amino-acid sequence, 129 residues long: Fluoride-specific ion channel FluC 1 (129 aa).

Transmembrane regions (helical) follow at residues 9–29 (LSVGIFAFFGGGLRAYLNLIW), 33–53 (GTLTANIIGCFLLAFFTYFFV), 62–82 (LVTGLSTGFVGSFTTFSSFNL), and 98–118 (IYFFSSIFIGFLFAYLGMLVG). Residues Gly-72 and Thr-75 each contribute to the Na(+) site.

Belongs to the fluoride channel Fluc/FEX (TC 1.A.43) family.

The protein localises to the cell membrane. It carries out the reaction fluoride(in) = fluoride(out). Its activity is regulated as follows. Na(+) is not transported, but it plays an essential structural role and its presence is essential for fluoride channel function. Functionally, fluoride-specific ion channel. Important for reducing fluoride concentration in the cell, thus reducing its toxicity. This is Fluoride-specific ion channel FluC 1 from Lactobacillus johnsonii (strain CNCM I-12250 / La1 / NCC 533).